A 365-amino-acid polypeptide reads, in one-letter code: Magnesium-chelatase subunit ChlI homolog (365 aa).

40–47 (EKGTAKST) lines the ATP pocket. The segment at 340–365 (FKQQNNKDNEEKEEHKDDDVKKNMMK) is disordered. Residues 344–365 (NNKDNEEKEEHKDDDVKKNMMK) show a composition bias toward basic and acidic residues.

The protein belongs to the Mg-chelatase subunits D/I family.

In Methanocaldococcus jannaschii (strain ATCC 43067 / DSM 2661 / JAL-1 / JCM 10045 / NBRC 100440) (Methanococcus jannaschii), this protein is Magnesium-chelatase subunit ChlI homolog.